Consider the following 360-residue polypeptide: Protein RecA (360 aa).

66–73 (GPESSGKT) contacts ATP. A disordered region spans residues 330 to 360 (DAKAIEERENPEKVKQDKEVPVNKDASDEKK).

Belongs to the RecA family.

The protein localises to the cytoplasm. Functionally, can catalyze the hydrolysis of ATP in the presence of single-stranded DNA, the ATP-dependent uptake of single-stranded DNA by duplex DNA, and the ATP-dependent hybridization of homologous single-stranded DNAs. It interacts with LexA causing its activation and leading to its autocatalytic cleavage. This Lactobacillus johnsonii (strain CNCM I-12250 / La1 / NCC 533) protein is Protein RecA.